A 154-amino-acid chain; its full sequence is Aspartate carbamoyltransferase regulatory chain (154 aa).

Residues cysteine 109, cysteine 114, cysteine 138, and cysteine 141 each contribute to the Zn(2+) site.

Belongs to the PyrI family. Contains catalytic and regulatory chains. It depends on Zn(2+) as a cofactor.

Functionally, involved in allosteric regulation of aspartate carbamoyltransferase. In Aliivibrio salmonicida (strain LFI1238) (Vibrio salmonicida (strain LFI1238)), this protein is Aspartate carbamoyltransferase regulatory chain.